We begin with the raw amino-acid sequence, 252 residues long: Pimeloyl-[acyl-carrier protein] methyl ester esterase (252 aa).

One can recognise an AB hydrolase-1 domain in the interval 15-239 (LVMLHGWAMH…FPHCGHAPFL (225 aa)). Residues Trp-21, 81 to 82 (SL), and 143 to 147 (FLTLQ) contribute to the substrate site. Ser-81 acts as the Nucleophile in catalysis. Active-site residues include Asp-207 and His-235. His-235 contacts substrate.

The protein belongs to the AB hydrolase superfamily. Carboxylesterase BioH family. As to quaternary structure, monomer.

The protein localises to the cytoplasm. It carries out the reaction 6-carboxyhexanoyl-[ACP] methyl ester + H2O = 6-carboxyhexanoyl-[ACP] + methanol + H(+). It participates in cofactor biosynthesis; biotin biosynthesis. Its function is as follows. The physiological role of BioH is to remove the methyl group introduced by BioC when the pimeloyl moiety is complete. It allows to synthesize pimeloyl-ACP via the fatty acid synthetic pathway through the hydrolysis of the ester bonds of pimeloyl-ACP esters. The chain is Pimeloyl-[acyl-carrier protein] methyl ester esterase from Nitrosomonas europaea (strain ATCC 19718 / CIP 103999 / KCTC 2705 / NBRC 14298).